A 220-amino-acid polypeptide reads, in one-letter code: Coat protein TP4 (220 aa).

It is found in the virion. The chain is Coat protein TP4 from Thermoproteus tenax (TTV1).